The following is a 480-amino-acid chain: Cobyric acid synthase (480 aa).

The region spanning 249–436 is the GATase cobBQ-type domain; the sequence is KLKVVVPVLT…LHGFLDSEAA (188 aa). Cysteine 330 functions as the Nucleophile in the catalytic mechanism. Histidine 428 is a catalytic residue.

Belongs to the CobB/CobQ family. CobQ subfamily.

It participates in cofactor biosynthesis; adenosylcobalamin biosynthesis. Its function is as follows. Catalyzes amidations at positions B, D, E, and G on adenosylcobyrinic A,C-diamide. NH(2) groups are provided by glutamine, and one molecule of ATP is hydrogenolyzed for each amidation. This is Cobyric acid synthase from Vibrio vulnificus (strain YJ016).